Reading from the N-terminus, the 505-residue chain is Cytochrome P450 9b2 (505 aa).

Cys449 contributes to the heme binding site.

Belongs to the cytochrome P450 family. The cofactor is heme.

The protein resides in the endoplasmic reticulum membrane. It localises to the microsome membrane. Its function is as follows. May be involved in the metabolism of insect hormones and in the breakdown of synthetic insecticides. The protein is Cytochrome P450 9b2 (Cyp9b2) of Drosophila melanogaster (Fruit fly).